The primary structure comprises 346 residues: Biotin synthase (346 aa).

One can recognise a Radical SAM core domain in the interval 38-256 (QQVQVSTLLS…IAVARIMMPT (219 aa)). Positions 53, 57, and 60 each coordinate [4Fe-4S] cluster. Residues Cys97, Cys128, Cys188, and Arg260 each coordinate [2Fe-2S] cluster.

This sequence belongs to the radical SAM superfamily. Biotin synthase family. Homodimer. [4Fe-4S] cluster serves as cofactor. [2Fe-2S] cluster is required as a cofactor.

It catalyses the reaction (4R,5S)-dethiobiotin + (sulfur carrier)-SH + 2 reduced [2Fe-2S]-[ferredoxin] + 2 S-adenosyl-L-methionine = (sulfur carrier)-H + biotin + 2 5'-deoxyadenosine + 2 L-methionine + 2 oxidized [2Fe-2S]-[ferredoxin]. It functions in the pathway cofactor biosynthesis; biotin biosynthesis; biotin from 7,8-diaminononanoate: step 2/2. Catalyzes the conversion of dethiobiotin (DTB) to biotin by the insertion of a sulfur atom into dethiobiotin via a radical-based mechanism. This is Biotin synthase from Salmonella agona (strain SL483).